Reading from the N-terminus, the 84-residue chain is Omega-conotoxin-like ArMKLT1-02 (84 aa).

An N-terminal signal peptide occupies residues 1 to 22 (MKVTCMMIVAVLFLTAWTFVTA). Residues 23-51 (DDSISALEDLFAKAHDKMENSEASPLNER) constitute a propeptide that is removed on maturation. 3 disulfides stabilise this stretch: Cys-53/Cys-71, Cys-60/Cys-75, and Cys-70/Cys-79.

Belongs to the conotoxin O1 superfamily. Expressed by the venom duct.

It is found in the secreted. Functionally, omega-conotoxins act at presynaptic membranes, they bind and block voltage-gated calcium channels (Cav). This chain is Omega-conotoxin-like ArMKLT1-02, found in Conus arenatus (Sand-dusted cone).